A 437-amino-acid polypeptide reads, in one-letter code: Probable glycine dehydrogenase (decarboxylating) subunit 1 (437 aa).

The protein belongs to the GcvP family. N-terminal subunit subfamily. As to quaternary structure, the glycine cleavage system is composed of four proteins: P, T, L and H. In this organism, the P 'protein' is a heterodimer of two subunits.

The catalysed reaction is N(6)-[(R)-lipoyl]-L-lysyl-[glycine-cleavage complex H protein] + glycine + H(+) = N(6)-[(R)-S(8)-aminomethyldihydrolipoyl]-L-lysyl-[glycine-cleavage complex H protein] + CO2. In terms of biological role, the glycine cleavage system catalyzes the degradation of glycine. The P protein binds the alpha-amino group of glycine through its pyridoxal phosphate cofactor; CO(2) is released and the remaining methylamine moiety is then transferred to the lipoamide cofactor of the H protein. The sequence is that of Probable glycine dehydrogenase (decarboxylating) subunit 1 from Thermotoga maritima (strain ATCC 43589 / DSM 3109 / JCM 10099 / NBRC 100826 / MSB8).